The following is a 649-amino-acid chain: Beta-galactosidase-1-like protein 3 (649 aa).

The active-site Proton donor is the glutamate 203. Glutamate 277 acts as the Nucleophile in catalysis.

It belongs to the glycosyl hydrolase 35 family.

This is Beta-galactosidase-1-like protein 3 (Glb1l3) from Mus musculus (Mouse).